The following is a 179-amino-acid chain: Fas apoptotic inhibitory molecule 1 (179 aa).

At Thr2 the chain carries N-acetylthreonine.

Belongs to the FAIM1 family.

It localises to the cytoplasm. In terms of biological role, plays a role as an inducible effector molecule that mediates Fas resistance produced by surface Ig engagement in B cells. The polypeptide is Fas apoptotic inhibitory molecule 1 (FAIM) (Homo sapiens (Human)).